We begin with the raw amino-acid sequence, 88 residues long: Apolipoprotein C-I (88 aa).

Positions 1–26 are cleaved as a signal peptide; that stretch reads MRLILSLPVLVVVLSMVLEGPAPAQA.

This sequence belongs to the apolipoprotein C1 family.

The protein resides in the secreted. Functionally, inhibitor of lipoprotein binding to the low density lipoprotein (LDL) receptor, LDL receptor-related protein, and very low density lipoprotein (VLDL) receptor. Associates with high density lipoproteins (HDL) and the triacylglycerol-rich lipoproteins in the plasma and makes up about 10% of the protein of the VLDL and 2% of that of HDL. Appears to interfere directly with fatty acid uptake and is also the major plasma inhibitor of cholesteryl ester transfer protein (CETP). Binds free fatty acids and reduces their intracellular esterification. Modulates the interaction of APOE with beta-migrating VLDL and inhibits binding of beta-VLDL to the LDL receptor-related protein. The polypeptide is Apolipoprotein C-I (APOC1) (Lycaon pictus (African wild dog)).